A 199-amino-acid chain; its full sequence is dCTP deaminase (199 aa).

Residues 110–115, Asp-128, 136–138, Tyr-171, and Gln-182 each bind dCTP; these read RSSLAR and VLE. Glu-138 (proton donor/acceptor) is an active-site residue.

The protein belongs to the dCTP deaminase family. As to quaternary structure, homotrimer.

The catalysed reaction is dCTP + H2O + H(+) = dUTP + NH4(+). It functions in the pathway pyrimidine metabolism; dUMP biosynthesis; dUMP from dCTP (dUTP route): step 1/2. In terms of biological role, catalyzes the deamination of dCTP to dUTP. This chain is dCTP deaminase, found in Pseudoalteromonas atlantica (strain T6c / ATCC BAA-1087).